The chain runs to 307 residues: Thymidylate synthase (307 aa).

The interval Met-1–His-22 is disordered. Polar residues predominate over residues Glu-7–Arg-16. Arg-44 serves as a coordination point for dUMP. Residue Ser-108 is modified to Phosphoserine. Residues Arg-169 to Arg-170, Cys-189 to His-190, Arg-209 to Asp-212, Asn-220, and His-250 to Tyr-252 each bind dUMP. Cys-189 functions as the Nucleophile in the catalytic mechanism. Residue Asp-212 participates in (6R)-5,10-methylene-5,6,7,8-tetrahydrofolate binding. Residues Lys-286 and Lys-302 each participate in a glycyl lysine isopeptide (Lys-Gly) (interchain with G-Cter in SUMO2) cross-link. Position 306 (Ala-306) interacts with (6R)-5,10-methylene-5,6,7,8-tetrahydrofolate.

Belongs to the thymidylate synthase family. In terms of assembly, homodimer.

Its subcellular location is the nucleus. It is found in the cytoplasm. The protein resides in the mitochondrion. It localises to the mitochondrion matrix. The protein localises to the mitochondrion inner membrane. The enzyme catalyses dUMP + (6R)-5,10-methylene-5,6,7,8-tetrahydrofolate = 7,8-dihydrofolate + dTMP. It functions in the pathway pyrimidine metabolism; dTTP biosynthesis. Functionally, catalyzes the reductive methylation of 2'-deoxyuridine 5'-monophosphate (dUMP) to thymidine 5'-monophosphate (dTMP), using the cosubstrate, 5,10- methylenetetrahydrofolate (CH2H4folate) as a 1-carbon donor and reductant and contributes to the de novo mitochondrial thymidylate biosynthesis pathway. The polypeptide is Thymidylate synthase (Tyms) (Rattus norvegicus (Rat)).